The chain runs to 433 residues: tRNA(Ile)-lysidine synthase (433 aa).

27–32 serves as a coordination point for ATP; sequence SGGLDS.

It belongs to the tRNA(Ile)-lysidine synthase family.

It is found in the cytoplasm. The enzyme catalyses cytidine(34) in tRNA(Ile2) + L-lysine + ATP = lysidine(34) in tRNA(Ile2) + AMP + diphosphate + H(+). Ligates lysine onto the cytidine present at position 34 of the AUA codon-specific tRNA(Ile) that contains the anticodon CAU, in an ATP-dependent manner. Cytidine is converted to lysidine, thus changing the amino acid specificity of the tRNA from methionine to isoleucine. The chain is tRNA(Ile)-lysidine synthase from Legionella pneumophila subsp. pneumophila (strain Philadelphia 1 / ATCC 33152 / DSM 7513).